The chain runs to 256 residues: Glucanase inhibitor protein 2 (256 aa).

The signal sequence occupies residues 1-15 (MKLISTIAAATTAFG). In terms of domain architecture, Peptidase S1 spans 27 to 254 (IFGGGIIPSG…ATEWINSVTK (228 aa)). Cys54 and Cys70 are disulfide-bonded. 4 N-linked (GlcNAc...) asparagine glycosylation sites follow: Asn87, Asn102, Asn107, and Asn157. Cystine bridges form between Cys177/Cys189 and Cys199/Cys230.

It belongs to the peptidase S1 family. Forms an apoplastic complex with host endoglucanases in tomato leaves during P.infestans infection.

It localises to the secreted. Its function is as follows. Secreted effector that suppresses host plant glucan elicitor-mediated defense responses. Targets host endoglucanases and inhibits the endoglucanase-mediated release of elicitor-active glucan oligosaccharides from P.infestans cell walls. The sequence is that of Glucanase inhibitor protein 2 from Phytophthora infestans (Potato late blight agent).